Reading from the N-terminus, the 508-residue chain is Photosystem II CP47 reaction center protein (508 aa).

6 helical membrane-spanning segments follow: residues 21–36, 101–115, 140–156, 203–218, 237–252, and 457–472; these read SVHI…WAGS, IVFS…IWHW, GIHL…FGAF, IAAG…FHLS, VLSS…AFVV, and SFAL…HGAR.

The protein belongs to the PsbB/PsbC family. PsbB subfamily. PSII is composed of 1 copy each of membrane proteins PsbA, PsbB, PsbC, PsbD, PsbE, PsbF, PsbH, PsbI, PsbJ, PsbK, PsbL, PsbM, PsbT, PsbX, PsbY, PsbZ, Psb30/Ycf12, at least 3 peripheral proteins of the oxygen-evolving complex and a large number of cofactors. It forms dimeric complexes. Binds multiple chlorophylls. PSII binds additional chlorophylls, carotenoids and specific lipids. is required as a cofactor.

The protein localises to the plastid. Its subcellular location is the chloroplast thylakoid membrane. In terms of biological role, one of the components of the core complex of photosystem II (PSII). It binds chlorophyll and helps catalyze the primary light-induced photochemical processes of PSII. PSII is a light-driven water:plastoquinone oxidoreductase, using light energy to abstract electrons from H(2)O, generating O(2) and a proton gradient subsequently used for ATP formation. This chain is Photosystem II CP47 reaction center protein, found in Aethionema cordifolium (Lebanon stonecress).